Consider the following 220-residue polypeptide: Aspartic protease inhibitor 2 (220 aa).

The signal sequence occupies residues 1–23 (MMKCLFLLCLCLLPIVVFSSTFT). Residues 24 to 32 (SQNLIDLPS) constitute a propeptide that is removed on maturation. A Vacuolar targeting signal motif is present at residues 26 to 31 (NLIDLP). N-linked (GlcNAc...) asparagine glycosylation occurs at Asn-51. Intrachain disulfides connect Cys-80/Cys-125 and Cys-174/Cys-185.

This sequence belongs to the protease inhibitor I3 (leguminous Kunitz-type inhibitor) family. In terms of tissue distribution, tubers.

The protein localises to the vacuole. In terms of biological role, inhibitor of cathepsin D (aspartic protease). May also inhibit trypsin and chymotrypsin (serine proteases). Protects the plant by inhibiting proteases of invading organisms. The protein is Aspartic protease inhibitor 2 of Solanum tuberosum (Potato).